Here is a 266-residue protein sequence, read N- to C-terminus: Type III pantothenate kinase (266 aa).

Residue 11 to 18 (DIGNTSTV) participates in ATP binding. 111–114 (GADR) lines the substrate pocket. The active-site Proton acceptor is Asp113. Asp135 serves as a coordination point for K(+). Residue Thr138 coordinates ATP. Residue Thr190 coordinates substrate.

The protein belongs to the type III pantothenate kinase family. Homodimer. NH4(+) serves as cofactor. It depends on K(+) as a cofactor.

Its subcellular location is the cytoplasm. It catalyses the reaction (R)-pantothenate + ATP = (R)-4'-phosphopantothenate + ADP + H(+). Its pathway is cofactor biosynthesis; coenzyme A biosynthesis; CoA from (R)-pantothenate: step 1/5. Catalyzes the phosphorylation of pantothenate (Pan), the first step in CoA biosynthesis. This Deinococcus geothermalis (strain DSM 11300 / CIP 105573 / AG-3a) protein is Type III pantothenate kinase.